The sequence spans 276 residues: Palmitoyltransferase ZDHHC22 (276 aa).

The Cytoplasmic portion of the chain corresponds to 1–9 (MGKLKLLNT). The chain crosses the membrane as a helical span at residues 10–30 (IAPAYFYAATVVTFALHFLLF). Residues 31 to 45 (TPTIFQSSDVTINPA) lie on the Lumenal side of the membrane. Residues 46 to 66 (MLAHISIFLFLMGNALGNYIM) traverse the membrane as a helical segment. The Cytoplasmic portion of the chain corresponds to 67-131 (TIRNPSESAN…NCIGNRNMRY (65 aa)). Positions 101-137 (HFCKVCKKVILKRDHHCFFTGNCIGNRNMRYFIMFSI) constitute a DHHC domain. The active-site S-palmitoyl cysteine intermediate is C117. Residues 132 to 152 (FIMFSIYTSSSCLYSLVIGVA) traverse the membrane as a helical segment. Topologically, residues 153 to 165 (YLTIEYSISFENP) are lumenal. The chain crosses the membrane as a helical span at residues 166-186 (LTFLTLLPLSTGYFFLGLISG). Residues 187–188 (LQ) are Cytoplasmic-facing. A helical membrane pass occupies residues 189-209 (FFLVIMLYIWLGIGLVSVGFC). The Lumenal segment spans residues 210-276 (CQQLLLVARG…WQVYHDHKHD (67 aa)).

The protein belongs to the DHHC palmitoyltransferase family.

The protein localises to the endoplasmic reticulum membrane. Its subcellular location is the golgi apparatus membrane. The enzyme catalyses L-cysteinyl-[protein] + hexadecanoyl-CoA = S-hexadecanoyl-L-cysteinyl-[protein] + CoA. Palmitoyltransferase that could catalyze the addition of palmitate onto various protein substrates and be involved in a variety of cellular processes. The protein is Palmitoyltransferase ZDHHC22 (zdhhc22) of Danio rerio (Zebrafish).